The chain runs to 264 residues: 14-3-3-like protein GF14-A (264 aa).

The interval aspartate 245–histidine 264 is disordered. Residues aspartate 252 to histidine 264 are compositionally biased toward basic and acidic residues.

Belongs to the 14-3-3 family.

Its function is as follows. Is associated with a DNA binding complex that binds to the G box, a well-characterized cis-acting DNA regulatory element found in plant genes. This Oryza sativa subsp. japonica (Rice) protein is 14-3-3-like protein GF14-A (GF14A).